The following is a 455-amino-acid chain: Tubulin delta chain (455 aa).

A GTP-binding site is contributed by 143-149; sequence AGGTGSG.

It belongs to the tubulin family. Found in a complex with TEDC1, TEDC2, TUBE1 and TUBD1. Highly expressed in testis.

It is found in the cell projection. It localises to the cilium. The protein localises to the cytoplasm. The protein resides in the cytoskeleton. Its subcellular location is the microtubule organizing center. It is found in the centrosome. It localises to the centriole. The protein localises to the nucleus. Its function is as follows. Acts as a positive regulator of hedgehog signaling and regulates ciliary function. The chain is Tubulin delta chain (Tubd1) from Mus musculus (Mouse).